A 98-amino-acid polypeptide reads, in one-letter code: Protein Vpr (98 aa).

The segment at 1–42 (MEQLPEDQGPQREPYNEWTLEILEELKREAVRHFPRDWLHQL) is homooligomerization. Phosphoserine; by host is present on residues Ser-79 and Ser-98.

This sequence belongs to the HIV-1 VPR protein family. As to quaternary structure, homooligomer, may form homodimer. Interacts with p6-gag region of the Pr55 Gag precursor protein through a (Leu-X-X)4 motif near the C-terminus of the P6gag protein. Interacts with host UNG. May interact with host RAD23A/HHR23A. Interacts with host VPRBP/DCAF1, leading to hijack the CUL4A-RBX1-DDB1-DCAF1/VPRBP complex, mediating ubiquitination of host proteins such as TERT and ZGPAT and arrest of the cell cycle in G2 phase. Phosphorylated on several residues by host. These phosphorylations regulate VPR activity for the nuclear import of the HIV-1 pre-integration complex.

It localises to the virion. It is found in the host nucleus. The protein resides in the host extracellular space. Functionally, during virus replication, may deplete host UNG protein, and incude G2-M cell cycle arrest. Acts by targeting specific host proteins for degradation by the 26S proteasome, through association with the cellular CUL4A-DDB1 E3 ligase complex by direct interaction with host VPRPB/DCAF-1. Cell cycle arrest reportedly occurs within hours of infection and is not blocked by antiviral agents, suggesting that it is initiated by the VPR carried into the virion. Additionally, VPR induces apoptosis in a cell cycle dependent manner suggesting that these two effects are mechanistically linked. Detected in the serum and cerebrospinal fluid of AIDS patient, VPR may also induce cell death to bystander cells. Its function is as follows. During virus entry, plays a role in the transport of the viral pre-integration (PIC) complex to the host nucleus. This function is crucial for viral infection of non-dividing macrophages. May act directly at the nuclear pore complex, by binding nucleoporins phenylalanine-glycine (FG)-repeat regions. The chain is Protein Vpr from Pan troglodytes (Chimpanzee).